We begin with the raw amino-acid sequence, 543 residues long: Terpineol synthase, chloroplastic (543 aa).

A disordered region spans residues 1–22 (MNTEPSPNHYSAISSSDQNLTR). The (2E)-geranyl diphosphate site is built by Arg-263, Asp-300, Asp-304, Arg-435, and Asn-438. Asp-300 and Asp-304 together coordinate Mg(2+). The short motif at 300–304 (DDVYD) is the DDXXD motif element. Positions 438, 442, and 446 each coordinate Mg(2+).

This sequence belongs to the terpene synthase family. Tpsb subfamily. As to quaternary structure, monomer. Requires Mg(2+) as cofactor. It depends on Mn(2+) as a cofactor. Confined to flowers.

The protein localises to the plastid. It localises to the chloroplast. It catalyses the reaction (2E)-geranyl diphosphate + H2O = (S)-alpha-terpineol + diphosphate. The enzyme catalyses (2E)-geranyl diphosphate = sabinene + diphosphate. The catalysed reaction is (2E)-geranyl diphosphate = beta-myrcene + diphosphate. It carries out the reaction (2E)-geranyl diphosphate = limonene + diphosphate. It catalyses the reaction (2E)-geranyl diphosphate + H2O = 1,8-cineole + diphosphate. Its pathway is secondary metabolite biosynthesis; terpenoid biosynthesis. Its function is as follows. Monoterpene synthase (TPS) involved in the biosynthesis of monoterpene natural products of the 'cineole cassette', volatile compounds present in floral scent. Catalyzes the conversion of (2E)-geranyl diphosphate (GPP) into alpha-terpineol and, as minor products, sabinene, beta-myrcene, limonene and 1,8-cineole. In Nicotiana alata (Winged tobacco), this protein is Terpineol synthase, chloroplastic.